A 391-amino-acid polypeptide reads, in one-letter code: Period circadian protein (391 aa).

Disordered stretches follow at residues 27–121 (VTAP…PPVT), 163–188 (MLEY…WEGE), 241–270 (GSSA…QFTQ), and 328–357 (SPSG…TSQA). Positions 93–114 (GTSGTGNSGDGGGGGGADGPGS) are enriched in gly residues. The span at 241–255 (GSSAGGNGSGTGNNN) shows a compositional bias: gly residues.

As to quaternary structure, forms a heterodimer with timeless (TIM); the complex then translocates into the nucleus. Phosphorylated with a circadian rhythmicity, probably by the double-time protein (dbt). Phosphorylation could be implicated in the stability of per monomer and in the formation of heterodimer per-tim.

It is found in the nucleus. The protein localises to the cytoplasm. It localises to the perinuclear region. Functionally, essential for biological clock functions. Determines the period length of circadian and ultradian rhythms; an increase in PER dosage leads to shortened circadian rhythms and a decrease leads to lengthened circadian rhythms. Essential for the circadian rhythmicity of locomotor activity, eclosion behavior, and for the rhythmic component of the male courtship song that originates in the thoracic nervous system. The biological cycle depends on the rhythmic formation and nuclear localization of the TIM-PER complex. Light induces the degradation of TIM, which promotes elimination of PER. Nuclear activity of the heterodimer coordinatively regulates PER and TIM transcription through a negative feedback loop. Behaves as a negative element in circadian transcriptional loop. Does not appear to bind DNA, suggesting indirect transcriptional inhibition. The chain is Period circadian protein (per) from Drosophila insularis (Fruit fly).